We begin with the raw amino-acid sequence, 405 residues long: Multidrug resistance protein MdtH (405 aa).

12 consecutive transmembrane segments (helical) span residues 13-33 (YFLLMDNMLVVMGFYVVFPLI), 34-54 (SIRFVDQLGWAALLVGIALGL), 78-95 (MIIAGMLMRALGFVLMGI), 99-116 (PWLLWLSCALSALGGTLF), 139-159 (LLMMQDSACSVIGALLGSWLL), 165-185 (LVCLAGAVLFVFAAIFNAWLL), 213-233 (YVLTLTGYYMLSVQVMLMLPI), 243-263 (AAVKWMYAIEAALSLSLLYPI), 277-297 (LMAGLTVMLLSLFPIGLIEDL), 299-319 (ALFMLIGLFYIGSIIAEPARE), 340-360 (LGLALGGAIGYSGGGWLYDVG), and 365-385 (IPQLPWFMLGLIGFITLLGLY).

This sequence belongs to the major facilitator superfamily. DHA1 family. MdtH (TC 2.A.1.2.21) subfamily.

The protein localises to the cell inner membrane. This Sodalis glossinidius (strain morsitans) protein is Multidrug resistance protein MdtH.